A 433-amino-acid polypeptide reads, in one-letter code: Alpha-(1,3)-fucosyltransferase 4 (433 aa).

The Cytoplasmic segment spans residues 1 to 52 (MAPARQELQHESRCRPSRTVDAWRAAVATRGRHMETPGYRRRTRCGGWGLPR). A helical; Signal-anchor for type II membrane protein transmembrane segment spans residues 53–74 (SVSSLAAVGLLCTALTTFICWG). The Lumenal segment spans residues 75–433 (QLPPLPWASP…IHNLADWFQR (359 aa)). 2 N-linked (GlcNAc...) asparagine glycosylation sites follow: Asn117 and Asn218.

It belongs to the glycosyltransferase 10 family. As to expression, highest expression in stomach and colon. It is also expressed in the lung, testis, uterus, small intestine and to a lesser extent in spleen, and ovary. Present in trace amounts in brain, thymus, heart, smooth muscle, kidney and bone marrow. Not found in liver, salivary gland and pancreas.

It localises to the golgi apparatus. It is found in the golgi stack membrane. The catalysed reaction is a beta-D-galactosyl-(1-&gt;4)-N-acetyl-beta-D-glucosaminyl derivative + GDP-beta-L-fucose = a beta-D-galactosyl-(1-&gt;4)-[alpha-L-fucosyl-(1-&gt;3)]-N-acetyl-beta-D-glucosaminyl derivative + GDP + H(+). It catalyses the reaction an N-acetyl-alpha-neuraminyl-(2-&gt;3)-beta-D-galactosyl-(1-&gt;4)-N-acetyl-beta-D-glucosaminyl derivative + GDP-beta-L-fucose = an alpha-Neu5Ac-(2-&gt;3)-beta-D-Gal-(1-&gt;4)-[alpha-L-Fuc-(1-&gt;3)]-beta-D-GlcNAc derivative + GDP + H(+). The enzyme catalyses an alpha-Neu5Ac-(2-&gt;3)-beta-D-Gal-(1-&gt;4)-beta-D-GlcNAc-(1-&gt;3)-beta-D-Gal-(1-&gt;4)-beta-D-GlcNAc derivative + GDP-beta-L-fucose = an alpha-Neu5Ac-(2-&gt;3)-beta-D-Gal-(1-&gt;4)-beta-D-GlcNAc-(1-&gt;3)-beta-D-Gal-(1-&gt;4)-[alpha-L-Fuc-(1-&gt;3)]-beta-D-GlcNAc derivative + GDP + H(+). It carries out the reaction an alpha-Neu5Ac-(2-&gt;3)-beta-D-Gal-(1-&gt;4)-beta-D-GlcNAc6S derivative + GDP-beta-L-fucose = an alpha-Neu5Ac-(2-&gt;3)-beta-D-Gal-(1-&gt;4)-[alpha-L-Fuc-(1-&gt;3)]-beta-D-GlcNAc6S derivative + GDP + H(+). The protein operates within protein modification; protein glycosylation. Functionally, catalyzes alpha(1-&gt;3) linkage of fucosyl moiety transferred from GDP-beta-L-fucose to N-acetyl glucosamine (GlcNAc) within type 2 lactosamine (LacNAc, Gal-beta(1-&gt;4)GlcNAc) glycan attached to N- or O-linked glycoproteins. Robustly fucosylates nonsialylated distal LacNAc unit of the polylactosamine chain to form Lewis X antigen (CD15), a glycan determinant known to mediate important cellular functions in development and immunity. Fucosylates with lower efficiency sialylated LacNAc acceptors to form sialyl Lewis X and 6-sulfo sialyl Lewis X determinants that serve as recognition epitopes for C-type lectins. Together with FUT7 contributes to SELE, SELL and SELP selectin ligand biosynthesis and selectin-dependent lymphocyte homing, leukocyte migration and blood leukocyte homeostasis. In a cell type specific manner, may also fucosylate the internal LacNAc unit of the polylactosamine chain to form VIM-2 antigen that serves as recognition epitope for SELE. In Mus musculus (Mouse), this protein is Alpha-(1,3)-fucosyltransferase 4 (Fut4).